A 64-amino-acid polypeptide reads, in one-letter code: Prokaryotic ubiquitin-like protein Pup (64 aa).

The span at 1–11 (MAQEQTKRTGG) shows a compositional bias: basic and acidic residues. Positions 1-38 (MAQEQTKRTGGGDEDDTPGGDGAAGQERREKLAEDTDD) are disordered. The tract at residues 21-58 (DGAAGQERREKLAEDTDDLLDEIDDVLEENAEDFVRAY) is ARC ATPase binding. Residues 24–52 (AGQERREKLAEDTDDLLDEIDDVLEENAE) are a coiled coil. Residue glutamine 64 is modified to Deamidated glutamine. Glutamine 64 participates in a covalent cross-link: Isoglutamyl lysine isopeptide (Gln-Lys) (interchain with K-? in acceptor proteins).

The protein belongs to the prokaryotic ubiquitin-like protein family. Strongly interacts with the proteasome-associated ATPase ARC through a hydrophobic interface; the interacting region of Pup lies in its C-terminal half. There is one Pup binding site per ARC hexamer ring. Post-translationally, is modified by deamidation of its C-terminal glutamine to glutamate by the deamidase Dop, a prerequisite to the subsequent pupylation process.

The protein operates within protein degradation; proteasomal Pup-dependent pathway. In terms of biological role, protein modifier that is covalently attached to lysine residues of substrate proteins, thereby targeting them for proteasomal degradation. The tagging system is termed pupylation. The sequence is that of Prokaryotic ubiquitin-like protein Pup from Rhodococcus opacus (strain B4).